Here is a 353-residue protein sequence, read N- to C-terminus: Photosystem II D2 protein (353 aa).

T2 is subject to N-acetylthreonine. The residue at position 2 (T2) is a Phosphothreonine. The chain crosses the membrane as a helical span at residues C41–T61. H118 contributes to the chlorophyll a binding site. Residues G125 to P141 traverse the membrane as a helical segment. Residues Q130 and N143 each contribute to the pheophytin a site. Residues V153–S166 traverse the membrane as a helical segment. H198 provides a ligand contact to chlorophyll a. A helical transmembrane segment spans residues A208 to D228. A plastoquinone contacts are provided by H215 and F262. A Fe cation-binding site is contributed by H215. A Fe cation-binding site is contributed by H269. Residues G279–R295 traverse the membrane as a helical segment.

It belongs to the reaction center PufL/M/PsbA/D family. As to quaternary structure, PSII is composed of 1 copy each of membrane proteins PsbA, PsbB, PsbC, PsbD, PsbE, PsbF, PsbH, PsbI, PsbJ, PsbK, PsbL, PsbM, PsbT, PsbX, PsbY, PsbZ, Psb30/Ycf12, at least 3 peripheral proteins of the oxygen-evolving complex and a large number of cofactors. It forms dimeric complexes. The D1/D2 heterodimer binds P680, chlorophylls that are the primary electron donor of PSII, and subsequent electron acceptors. It shares a non-heme iron and each subunit binds pheophytin, quinone, additional chlorophylls, carotenoids and lipids. There is also a Cl(-1) ion associated with D1 and D2, which is required for oxygen evolution. The PSII complex binds additional chlorophylls, carotenoids and specific lipids. serves as cofactor.

It is found in the plastid. The protein localises to the chloroplast thylakoid membrane. The catalysed reaction is 2 a plastoquinone + 4 hnu + 2 H2O = 2 a plastoquinol + O2. Photosystem II (PSII) is a light-driven water:plastoquinone oxidoreductase that uses light energy to abstract electrons from H(2)O, generating O(2) and a proton gradient subsequently used for ATP formation. It consists of a core antenna complex that captures photons, and an electron transfer chain that converts photonic excitation into a charge separation. The D1/D2 (PsbA/PsbD) reaction center heterodimer binds P680, the primary electron donor of PSII as well as several subsequent electron acceptors. D2 is needed for assembly of a stable PSII complex. In Welwitschia mirabilis (Tree tumbo), this protein is Photosystem II D2 protein.